Here is a 424-residue protein sequence, read N- to C-terminus: Histidine--tRNA ligase (424 aa).

Belongs to the class-II aminoacyl-tRNA synthetase family. Homodimer.

The protein resides in the cytoplasm. It catalyses the reaction tRNA(His) + L-histidine + ATP = L-histidyl-tRNA(His) + AMP + diphosphate + H(+). The polypeptide is Histidine--tRNA ligase (Shewanella woodyi (strain ATCC 51908 / MS32)).